The chain runs to 334 residues: Cytochrome c biogenesis protein CcsA (334 aa).

A run of 8 helical transmembrane segments spans residues 12 to 32 (NTAF…VVFP), 35 to 55 (WLVQ…TALL), 67 to 87 (ISNL…VHFI), 96 to 116 (FVGA…ALTL), 141 to 161 (VMMV…AFLF), 242 to 262 (IIGL…VWAN), 277 to 297 (WALI…TKGW), and 303 to 323 (AILA…VNLL).

It belongs to the CcmF/CycK/Ccl1/NrfE/CcsA family. May interact with ccs1.

The protein localises to the cellular thylakoid membrane. In terms of biological role, required during biogenesis of c-type cytochromes (cytochrome c6 and cytochrome f) at the step of heme attachment. The sequence is that of Cytochrome c biogenesis protein CcsA from Synechocystis sp. (strain ATCC 27184 / PCC 6803 / Kazusa).